The following is a 55-amino-acid chain: Large ribosomal subunit protein bL33 (55 aa).

It belongs to the bacterial ribosomal protein bL33 family.

The sequence is that of Large ribosomal subunit protein bL33 from Beijerinckia indica subsp. indica (strain ATCC 9039 / DSM 1715 / NCIMB 8712).